The chain runs to 438 residues: Transposon Ty2-B Gag polyprotein (438 aa).

Polar residues-rich tracts occupy residues 1–11 (MESQQLHQNPH), 19–39 (ASVTSKEVSSNQDPLAVSASN), and 49–60 (KVNSQQETTPGT). Disordered stretches follow at residues 1–88 (MESQ…YQQH), 364–397 (KNVSRTSPNTTNTKVTTRNYHRTNSSKPRAAKAH), and 419–438 (SSQYLSDDNELSLRPATERI). Positions 295–397 (ENNINVSDRL…SSKPRAAKAH (103 aa)) are RNA-binding. Residues 369-381 (TSPNTTNTKVTTR) are compositionally biased toward low complexity.

As to quaternary structure, homotrimer.

The protein localises to the cytoplasm. In terms of biological role, capsid protein (CA) is the structural component of the virus-like particle (VLP), forming the shell that encapsulates the retrotransposons dimeric RNA genome. The particles are assembled from trimer-clustered units and there are holes in the capsid shells that allow for the diffusion of macromolecules. CA also has nucleocapsid-like chaperone activity, promoting primer tRNA(i)-Met annealing to the multipartite primer-binding site (PBS), dimerization of Ty2 RNA and initiation of reverse transcription. This Saccharomyces cerevisiae (strain ATCC 204508 / S288c) (Baker's yeast) protein is Transposon Ty2-B Gag polyprotein (TY2A-B).